The chain runs to 568 residues: NADPH oxidase 3 (568 aa).

The Cytoplasmic portion of the chain corresponds to 1–12; sequence MPTCWILNESVS. Residues 13 to 33 traverse the membrane as a helical segment; it reads FVVALLWLAINIYLFIDTFCW. The Extracellular portion of the chain corresponds to 34-49; the sequence is YAEEESFFYTRVILGS. Residues 50 to 70 form a helical membrane-spanning segment; it reads ALAWARASAVCLNFNCMLILL. The region spanning 55–284 is the Ferric oxidoreductase domain; that stretch reads RASAVCLNFN…VVLYACEIII (230 aa). At 71-103 the chain is on the cytoplasmic side; sequence PVSRNFVSLVRGTSVCCRGPWRRQLDKNLKFHK. Residues 104-124 form a helical membrane-spanning segment; the sequence is LVAYGIAVNSVIHIVAHLFNL. Residues 125-167 are Extracellular-facing; the sequence is ERYHLGQAKDAEGLLAALSKLGNAPNESYLNPVRTLYTGTTTQ. Residues 168 to 188 form a helical membrane-spanning segment; the sequence is LLMTVSGITGLVISLALILIM. Residues 189-201 lie on the Cytoplasmic side of the membrane; the sequence is TSSTEFIRQSSYE. A helical membrane pass occupies residues 202-222; sequence LFWYTHHIFIFLFISLAIHGG. Topologically, residues 223–395 are extracellular; it reads GRIIRGQTPE…DGPFGGSLAD (173 aa). Asn238 carries an N-linked (GlcNAc...) asparagine glycan. Positions 285 to 395 constitute an FAD-binding FR-type domain; sequence RFWRSHQEVV…DGPFGGSLAD (111 aa). The helical transmembrane segment at 396-416 threads the bilayer; it reads VFHYPVSVCIATGIGVTPFAS. Residues 417–568 are Cytoplasmic-facing; sequence LLKSVWYKCC…VHFYYNKENF (152 aa).

Forms a heterodimer with CYBA/p22phox which is essential for its activity and cell membrane localization. Requires heme as cofactor. Post-translationally, N-glycosylated in a CYBA/p22phox-dependent manner. Expressed in the inner ear by the spiral glanglia and the organ of Corti.

The protein localises to the cell membrane. The enzyme catalyses NADPH + 2 O2 = 2 superoxide + NADP(+) + H(+). Activated by the ototoxic drug cisplatin. Activated by NOXO1. Cooperatively activated by NCF1 and NCF2 or NOXA1 in a phorbol 12-myristate 13-acetate (PMA)-dependent manner. Inhibited by diphenyleneiodonium chloride. In terms of biological role, NADPH oxidase that catalyzes the generation of superoxide from molecular oxygen utilizing NADPH as an electron donor, upon formation of a complex with CYBA/p22phox. Plays a role in the biogenesis of otoconia/otolith, which are crystalline structures of the inner ear involved in the perception of gravity. This is NADPH oxidase 3 (Nox3) from Rattus norvegicus (Rat).